Consider the following 420-residue polypeptide: Tyrosine--tRNA ligase (420 aa).

Tyr-36 provides a ligand contact to L-tyrosine. The short motif at 41–50 (PTADSLHIGH) is the 'HIGH' region element. L-tyrosine is bound by residues Tyr-170 and Gln-174. The short motif at 231-235 (KFGKS) is the 'KMSKS' region element. Lys-234 is an ATP binding site. Positions 353 to 420 (TNIVEVLIET…KKKYFMVNYQ (68 aa)) constitute an S4 RNA-binding domain.

It belongs to the class-I aminoacyl-tRNA synthetase family. TyrS type 1 subfamily. Homodimer.

The protein resides in the cytoplasm. It carries out the reaction tRNA(Tyr) + L-tyrosine + ATP = L-tyrosyl-tRNA(Tyr) + AMP + diphosphate + H(+). In terms of biological role, catalyzes the attachment of tyrosine to tRNA(Tyr) in a two-step reaction: tyrosine is first activated by ATP to form Tyr-AMP and then transferred to the acceptor end of tRNA(Tyr). The chain is Tyrosine--tRNA ligase from Staphylococcus aureus (strain COL).